The primary structure comprises 127 residues: UPF0102 protein Mmar10_3014 (127 aa).

Belongs to the UPF0102 family.

The sequence is that of UPF0102 protein Mmar10_3014 from Maricaulis maris (strain MCS10) (Caulobacter maris).